The primary structure comprises 182 residues: Ribosome-recycling factor (182 aa).

The disordered stretch occupies residues 136–158; it reads IKKQEKEGDLSEDQSRDEQDQVQ.

Belongs to the RRF family.

It localises to the cytoplasm. In terms of biological role, responsible for the release of ribosomes from messenger RNA at the termination of protein biosynthesis. May increase the efficiency of translation by recycling ribosomes from one round of translation to another. This chain is Ribosome-recycling factor, found in Synechococcus sp. (strain CC9311).